The chain runs to 1308 residues: Cadherin-related family member 2 (1308 aa).

An N-terminal signal peptide occupies residues Met-1 to Ala-20. Over Asn-21 to Ser-1152 the chain is Extracellular. Cadherin domains lie at Val-33–Phe-124, Leu-125–Phe-241, Ile-242–Phe-353, Ala-368–Phe-480, Ser-481–Val-586, Val-586–Phe-695, Phe-695–Leu-807, Ala-809–Phe-927, and Pro-929–Phe-1051. A helical membrane pass occupies residues Val-1153–Val-1173. The Cytoplasmic segment spans residues Cys-1174–Leu-1308. A mediates interaction with USH1C and MYO7B and is required for proper localization to microvilli tips and function in microvilli organization region spans residues Ser-1178–Leu-1308. Ser-1245 is subject to Phosphoserine. Positions Val-1251 to Leu-1308 are disordered. The span at Met-1255–Pro-1266 shows a compositional bias: basic and acidic residues. Residues Ala-1288–Leu-1308 show a composition bias toward polar residues. Ser-1297 carries the phosphoserine modification.

Part of the IMAC/intermicrovillar adhesion complex/intermicrovillar tip-link complex composed of ANKS4B, MYO7B, USH1C, CDHR2 and CDHR5. Interacts with MAST2. Interacts (via cytoplasmic domain) with USH1C and MYO7B; required for proper localization of CDHR2 to microvilli tips and its function in brush border differentiation.

It localises to the apical cell membrane. The protein localises to the cell projection. It is found in the microvillus membrane. Its subcellular location is the cell junction. Intermicrovillar adhesion molecule that forms, via its extracellular domain, calcium-dependent heterophilic complexes with CDHR5 on adjacent microvilli. Thereby, controls the packing of microvilli at the apical membrane of epithelial cells. Through its cytoplasmic domain, interacts with microvillus cytoplasmic proteins to form the intermicrovillar adhesion complex/IMAC. This complex plays a central role in microvilli and epithelial brush border differentiation. May also play a role in cell-cell adhesion and contact inhibition in epithelial cells. The protein is Cadherin-related family member 2 of Mus musculus (Mouse).